A 406-amino-acid chain; its full sequence is Peptidase T (406 aa).

Zn(2+) is bound at residue His-77. Residue Asp-79 is part of the active site. Residue Asp-139 coordinates Zn(2+). The active-site Proton acceptor is Glu-173. Glu-174, Asp-196, and His-377 together coordinate Zn(2+).

It belongs to the peptidase M20B family. Requires Zn(2+) as cofactor.

The protein resides in the cytoplasm. It catalyses the reaction Release of the N-terminal residue from a tripeptide.. Its function is as follows. Cleaves the N-terminal amino acid of tripeptides. The chain is Peptidase T from Parabacteroides distasonis (strain ATCC 8503 / DSM 20701 / CIP 104284 / JCM 5825 / NCTC 11152).